We begin with the raw amino-acid sequence, 205 residues long: uncharacterized protein (205 aa).

The next 3 helical transmembrane spans lie at 45–65 (LFFY…FLVI), 119–139 (VFWL…VTAF), and 144–164 (FEWM…LWGY).

It belongs to the TVP23 family.

The protein localises to the membrane. This is an uncharacterized protein from Caenorhabditis elegans.